Consider the following 188-residue polypeptide: Peptide deformylase (188 aa).

Fe cation is bound by residues Cys94 and His136. Glu137 is a catalytic residue. Residue His140 participates in Fe cation binding.

The protein belongs to the polypeptide deformylase family. It depends on Fe(2+) as a cofactor.

It carries out the reaction N-terminal N-formyl-L-methionyl-[peptide] + H2O = N-terminal L-methionyl-[peptide] + formate. Functionally, removes the formyl group from the N-terminal Met of newly synthesized proteins. Requires at least a dipeptide for an efficient rate of reaction. N-terminal L-methionine is a prerequisite for activity but the enzyme has broad specificity at other positions. This Chlorobium phaeobacteroides (strain DSM 266 / SMG 266 / 2430) protein is Peptide deformylase.